A 211-amino-acid polypeptide reads, in one-letter code: MTLTIALTKGRTETQVLPLLAAAGIHCEAIQAKSRRLIFADDPNFHFILVKAPDVLTYLNHGTVDIGIVGSDILAEQGHRQFDMLDLNTGRCRFILASTADFDPKQTKRKLIATKYPHIAQQYFQKQGEDVEIIKIEGSVELAPLTGMADAIVDITETGTTLRENHLKVFAELAPVSTHLVVNRLALKQKRTEIYQLIQSLQKVRPQEASL.

Belongs to the ATP phosphoribosyltransferase family. Short subfamily. As to quaternary structure, heteromultimer composed of HisG and HisZ subunits.

The protein resides in the cytoplasm. It catalyses the reaction 1-(5-phospho-beta-D-ribosyl)-ATP + diphosphate = 5-phospho-alpha-D-ribose 1-diphosphate + ATP. It functions in the pathway amino-acid biosynthesis; L-histidine biosynthesis; L-histidine from 5-phospho-alpha-D-ribose 1-diphosphate: step 1/9. Its function is as follows. Catalyzes the condensation of ATP and 5-phosphoribose 1-diphosphate to form N'-(5'-phosphoribosyl)-ATP (PR-ATP). Has a crucial role in the pathway because the rate of histidine biosynthesis seems to be controlled primarily by regulation of HisG enzymatic activity. This chain is ATP phosphoribosyltransferase, found in Lacticaseibacillus casei (strain BL23) (Lactobacillus casei).